The sequence spans 159 residues: Phosphopantetheine adenylyltransferase (159 aa).

Residue Ser-9 participates in substrate binding. Residues 9–10 (SF) and His-17 each bind ATP. Positions 41, 73, and 87 each coordinate substrate. Residues 88 to 90 (GLR), Glu-98, and 123 to 129 (YSYLSSS) each bind ATP.

Belongs to the bacterial CoaD family. In terms of assembly, homohexamer. Requires Mg(2+) as cofactor.

The protein resides in the cytoplasm. It carries out the reaction (R)-4'-phosphopantetheine + ATP + H(+) = 3'-dephospho-CoA + diphosphate. It participates in cofactor biosynthesis; coenzyme A biosynthesis; CoA from (R)-pantothenate: step 4/5. In terms of biological role, reversibly transfers an adenylyl group from ATP to 4'-phosphopantetheine, yielding dephospho-CoA (dPCoA) and pyrophosphate. The protein is Phosphopantetheine adenylyltransferase of Clostridium botulinum (strain Alaska E43 / Type E3).